The sequence spans 466 residues: 3-isopropylmalate dehydratase large subunit (466 aa).

Residues C347, C407, and C410 each coordinate [4Fe-4S] cluster.

This sequence belongs to the aconitase/IPM isomerase family. LeuC type 1 subfamily. In terms of assembly, heterodimer of LeuC and LeuD. [4Fe-4S] cluster is required as a cofactor.

The enzyme catalyses (2R,3S)-3-isopropylmalate = (2S)-2-isopropylmalate. The protein operates within amino-acid biosynthesis; L-leucine biosynthesis; L-leucine from 3-methyl-2-oxobutanoate: step 2/4. Catalyzes the isomerization between 2-isopropylmalate and 3-isopropylmalate, via the formation of 2-isopropylmaleate. The protein is 3-isopropylmalate dehydratase large subunit of Shewanella halifaxensis (strain HAW-EB4).